Reading from the N-terminus, the 48-residue chain is uncharacterized protein (48 aa).

This is an uncharacterized protein from Dictyostelium discoideum (Social amoeba).